A 445-amino-acid polypeptide reads, in one-letter code: Transmembrane protein 184C (445 aa).

7 helical membrane passes run 15–35 (LVVL…VWEL), 46–66 (AWFI…WGIL), 84–104 (ILWM…YPNI), 177–197 (YTVV…VGVY), 210–230 (YLVI…VLFY), 252–272 (VVFV…VGVI), and 285–305 (AVAT…AAIA). Disordered regions lie at residues 369–393 (EHTS…SSPM) and 421–445 (TSAT…LDRS). Residues 370 to 390 (HTSLLSSSTQDPISDASSMPS) show a composition bias toward polar residues.

This sequence belongs to the TMEM184 family.

It is found in the membrane. Functionally, may play a role in cell growth. The polypeptide is Transmembrane protein 184C (TMEM184C) (Gallus gallus (Chicken)).